The following is a 956-amino-acid chain: Plasma membrane ATPase 1 (956 aa).

Residues 1–65 (MAEKPEVLDA…EKKESKFLKF (65 aa)) are Cytoplasmic-facing. A helical membrane pass occupies residues 66–85 (LGFMWNPLSWVMEAAAIMAI). The Extracellular segment spans residues 86–97 (ALANGGGKPPDW). Residues 98–118 (QDFVGIITLLIINSTISFIEE) form a helical membrane-spanning segment. The Cytoplasmic portion of the chain corresponds to 119-247 (NNAGNAAAAL…GHFQKVLTAI (129 aa)). Residues 248-268 (GNFCICSIAVGMIIEIIVMYP) traverse the membrane as a helical segment. At 269–277 (IQHRKYRPG) the chain is on the extracellular side. The chain crosses the membrane as a helical span at residues 278–295 (IDNLLVLLIGGIPIAMPT). Residues 296-646 (VLSVTMAIGS…LTSRAIFQRM (351 aa)) lie on the Cytoplasmic side of the membrane. D333 functions as the 4-aspartylphosphate intermediate in the catalytic mechanism. Mg(2+) contacts are provided by D592 and D596. Residues 647 to 666 (KNYTIYAVSITIRIVLGFML) form a helical membrane-spanning segment. Residues 667–674 (LALIWKFD) are Extracellular-facing. A helical transmembrane segment spans residues 675–697 (FPPFMVLIIAILNDGTIMTISKD). Topologically, residues 698–713 (RVKPSPLPDSWKLAEI) are cytoplasmic. A helical transmembrane segment spans residues 714–734 (FTTGVVLGGYLAMMTVIFFWA). The Extracellular portion of the chain corresponds to 735–759 (AYKTNFFPRIFGVSTLEKTATDDFR). The helical transmembrane segment at 760–780 (KLASAIYLQVSTISQALIFVT) threads the bilayer. Topologically, residues 781-792 (RSRSWSFVERPG) are cytoplasmic. A helical transmembrane segment spans residues 793-813 (LLLVFAFFVAQLVATLIAVYA). Residues 814 to 821 (NWSFAAIE) are Extracellular-facing. A helical membrane pass occupies residues 822–842 (GIGWGWAGVIWLYNIVTYIPL). At 843–956 (DLIKFLIRYA…IETIQQSYTV (114 aa)) the chain is on the cytoplasmic side.

This sequence belongs to the cation transport ATPase (P-type) (TC 3.A.3) family. Type IIIA subfamily. Possibly exists as a homodimer or a homotrimer.

It localises to the cell membrane. The catalysed reaction is ATP + H2O + H(+)(in) = ADP + phosphate + 2 H(+)(out). Its function is as follows. The plasma membrane ATPase of plants and fungi is a hydrogen ion pump. The proton gradient it generates drives the active transport of nutrients by H(+)-symport. The resulting external acidification and/or internal alkinization may mediate growth responses. This chain is Plasma membrane ATPase 1 (LHA1), found in Solanum lycopersicum (Tomato).